Consider the following 316-residue polypeptide: 4-hydroxy-3-methylbut-2-enyl diphosphate reductase (316 aa).

Cys-12 is a [4Fe-4S] cluster binding site. The (2E)-4-hydroxy-3-methylbut-2-enyl diphosphate site is built by His-41 and His-74. Dimethylallyl diphosphate is bound by residues His-41 and His-74. Isopentenyl diphosphate is bound by residues His-41 and His-74. Cys-96 serves as a coordination point for [4Fe-4S] cluster. His-124 is a (2E)-4-hydroxy-3-methylbut-2-enyl diphosphate binding site. His-124 provides a ligand contact to dimethylallyl diphosphate. His-124 serves as a coordination point for isopentenyl diphosphate. Catalysis depends on Glu-126, which acts as the Proton donor. Thr-167 contacts (2E)-4-hydroxy-3-methylbut-2-enyl diphosphate. Cys-197 serves as a coordination point for [4Fe-4S] cluster. (2E)-4-hydroxy-3-methylbut-2-enyl diphosphate contacts are provided by Ser-225, Ser-226, Asn-227, and Ser-269. Residues Ser-225, Ser-226, Asn-227, and Ser-269 each coordinate dimethylallyl diphosphate. Residues Ser-225, Ser-226, Asn-227, and Ser-269 each contribute to the isopentenyl diphosphate site.

This sequence belongs to the IspH family. In terms of assembly, homodimer. Requires [4Fe-4S] cluster as cofactor.

It catalyses the reaction isopentenyl diphosphate + 2 oxidized [2Fe-2S]-[ferredoxin] + H2O = (2E)-4-hydroxy-3-methylbut-2-enyl diphosphate + 2 reduced [2Fe-2S]-[ferredoxin] + 2 H(+). The enzyme catalyses dimethylallyl diphosphate + 2 oxidized [2Fe-2S]-[ferredoxin] + H2O = (2E)-4-hydroxy-3-methylbut-2-enyl diphosphate + 2 reduced [2Fe-2S]-[ferredoxin] + 2 H(+). It functions in the pathway isoprenoid biosynthesis; dimethylallyl diphosphate biosynthesis; dimethylallyl diphosphate from (2E)-4-hydroxy-3-methylbutenyl diphosphate: step 1/1. Its pathway is isoprenoid biosynthesis; isopentenyl diphosphate biosynthesis via DXP pathway; isopentenyl diphosphate from 1-deoxy-D-xylulose 5-phosphate: step 6/6. Its function is as follows. Catalyzes the conversion of 1-hydroxy-2-methyl-2-(E)-butenyl 4-diphosphate (HMBPP) into a mixture of isopentenyl diphosphate (IPP) and dimethylallyl diphosphate (DMAPP). Acts in the terminal step of the DOXP/MEP pathway for isoprenoid precursor biosynthesis. This Salmonella paratyphi A (strain ATCC 9150 / SARB42) protein is 4-hydroxy-3-methylbut-2-enyl diphosphate reductase.